A 143-amino-acid chain; its full sequence is Anti-sigma F factor (143 aa).

This sequence belongs to the anti-sigma-factor family.

It carries out the reaction L-seryl-[protein] + ATP = O-phospho-L-seryl-[protein] + ADP + H(+). The enzyme catalyses L-threonyl-[protein] + ATP = O-phospho-L-threonyl-[protein] + ADP + H(+). Binds to sigma F and blocks its ability to form an RNA polymerase holoenzyme (E-sigma F). Phosphorylates SpoIIAA on a serine residue. This phosphorylation may enable SpoIIAA to act as an anti-anti-sigma factor that counteracts SpoIIAB and thus releases sigma F from inhibition. In Thermoanaerobacter pseudethanolicus (strain ATCC 33223 / 39E) (Clostridium thermohydrosulfuricum), this protein is Anti-sigma F factor.